We begin with the raw amino-acid sequence, 229 residues long: Trypsin (229 aa).

Positions 1–7 (APDDDDK) are cleaved as a propeptide — activation peptide. One can recognise a Peptidase S1 domain in the interval 8–227 (IVGGYECPKH…YVSWIHETIA (220 aa)). Cystine bridges form between Cys-14/Cys-143, Cys-32/Cys-48, Cys-116/Cys-216, Cys-123/Cys-189, Cys-154/Cys-168, and Cys-179/Cys-203. Residue His-47 is the Charge relay system of the active site. Ca(2+) contacts are provided by Glu-59 and Glu-69. Asp-91 functions as the Charge relay system in the catalytic mechanism. Ser-183 functions as the Charge relay system in the catalytic mechanism.

It belongs to the peptidase S1 family. Ca(2+) serves as cofactor.

The protein resides in the secreted. The protein localises to the extracellular space. It carries out the reaction Preferential cleavage: Arg-|-Xaa, Lys-|-Xaa.. The chain is Trypsin from Squalus acanthias (Spiny dogfish).